A 1021-amino-acid polypeptide reads, in one-letter code: Disease resistance protein Pikm2-TS (1021 aa).

The tract at residues 1 to 182 (MELVVGASEA…PQIIGIKEPV (182 aa)) is structured coiled coil (CC) domain. The NB-ARC domain occupies 186 to 519 (TVMEELEVWL…WIAEGFANEK (334 aa)). Residues 297–317 (PENDGNPDNTPIRLQETTDDD) are disordered. LRR repeat units lie at residues 612–634 (LAQV…SFNY), 659–682 (MLLL…IQKL), and 683–705 (EYLE…IVQL). The tract at residues 719–751 (RKGLRLPQEKSKKPIKNPSPQGKTKEPAKKGFL) is disordered. 6 LRR repeats span residues 785–807 (LTGL…TFKQ), 817–841 (SCGL…DMPA), 843–865 (PRYL…ITSI), 866–888 (TTLN…ILHI), 912–935 (KDIL…GFKS), and 957–981 (MPAL…ILEN).

This sequence belongs to the disease resistance NB-LRR family. In terms of tissue distribution, constitutively expressed.

Disease resistance (R) protein. Resistance proteins guard the plant against pathogens that contain an appropriate avirulence protein via an indirect interaction with this avirulence protein. That triggers a defense system including the hypersensitive response, which restricts the pathogen growth. Contribution of Pikm-1 is required to recognize the effector avirulence protein AVR-Pik. The protein is Disease resistance protein Pikm2-TS of Oryza sativa subsp. japonica (Rice).